The sequence spans 229 residues: Leucyl/phenylalanyl-tRNA--protein transferase (229 aa).

The protein belongs to the L/F-transferase family.

Its subcellular location is the cytoplasm. It catalyses the reaction N-terminal L-lysyl-[protein] + L-leucyl-tRNA(Leu) = N-terminal L-leucyl-L-lysyl-[protein] + tRNA(Leu) + H(+). The enzyme catalyses N-terminal L-arginyl-[protein] + L-leucyl-tRNA(Leu) = N-terminal L-leucyl-L-arginyl-[protein] + tRNA(Leu) + H(+). It carries out the reaction L-phenylalanyl-tRNA(Phe) + an N-terminal L-alpha-aminoacyl-[protein] = an N-terminal L-phenylalanyl-L-alpha-aminoacyl-[protein] + tRNA(Phe). In terms of biological role, functions in the N-end rule pathway of protein degradation where it conjugates Leu, Phe and, less efficiently, Met from aminoacyl-tRNAs to the N-termini of proteins containing an N-terminal arginine or lysine. This chain is Leucyl/phenylalanyl-tRNA--protein transferase, found in Desulforapulum autotrophicum (strain ATCC 43914 / DSM 3382 / VKM B-1955 / HRM2) (Desulfobacterium autotrophicum).